The following is a 354-amino-acid chain: UPF0283 membrane protein plu2581 (354 aa).

3 helical membrane passes run 71-91, 101-121, and 214-234; these read MVYGSLMLLGLSAVAQFVQWI, SALGVAAAGSMIVFAGIGSLV, and ESALMIAVSPLAIVDMAFIAW.

The protein belongs to the UPF0283 family.

The protein resides in the cell inner membrane. The sequence is that of UPF0283 membrane protein plu2581 from Photorhabdus laumondii subsp. laumondii (strain DSM 15139 / CIP 105565 / TT01) (Photorhabdus luminescens subsp. laumondii).